We begin with the raw amino-acid sequence, 872 residues long: Tetratricopeptide repeat protein 16 (872 aa).

Residues 1-20 are disordered; that stretch reads MTDSDEDALKVDQGPSQDIP. TPR repeat units follow at residues 61–94, 96–128, 136–169, 251–284, 285–318, 331–364, 365–398, and 406–439; these read VREY…DPQL, DFYA…QQDN, TFVL…QPEK, AQQA…NPLD, PSFF…VTED, LLTY…EQQE, KGLY…SPQD, and GLLQ…NPQK. Disordered regions lie at residues 557-640 and 653-872; these read ATPE…ETET and TAMT…YEVL. Over residues 577–590 the composition is skewed to acidic residues; the sequence is KEEEEKEEEEQKEE. Residues 591-604 show a composition bias toward basic and acidic residues; it reads EEQKKEEKKEEKKP. 4 stretches are compositionally biased toward polar residues: residues 610-640, 653-675, 689-709, and 721-754; these read KVAS…ETET, TAMT…NNRE, GQRQ…NFSK, and KTKA…SQGP. Residues 762-783 show a composition bias toward basic residues; that stretch reads KTTRSPRQRPRKVKAARGRSWR. 2 stretches are compositionally biased toward polar residues: residues 799-827 and 839-861; these read RSST…GQRT and GMSS…SKTE.

This chain is Tetratricopeptide repeat protein 16 (TTC16), found in Macaca fascicularis (Crab-eating macaque).